Reading from the N-terminus, the 187-residue chain is Protein GrpE (187 aa).

The disordered stretch occupies residues 1–30 (MEKKETKNETEKTNKQDNKNTKSQKKENLN).

Belongs to the GrpE family. As to quaternary structure, homodimer.

Its subcellular location is the cytoplasm. Functionally, participates actively in the response to hyperosmotic and heat shock by preventing the aggregation of stress-denatured proteins, in association with DnaK and GrpE. It is the nucleotide exchange factor for DnaK and may function as a thermosensor. Unfolded proteins bind initially to DnaJ; upon interaction with the DnaJ-bound protein, DnaK hydrolyzes its bound ATP, resulting in the formation of a stable complex. GrpE releases ADP from DnaK; ATP binding to DnaK triggers the release of the substrate protein, thus completing the reaction cycle. Several rounds of ATP-dependent interactions between DnaJ, DnaK and GrpE are required for fully efficient folding. The polypeptide is Protein GrpE (Borreliella afzelii (strain PKo) (Borrelia afzelii)).